Consider the following 1105-residue polypeptide: AP-3 complex subunit beta-1 (1105 aa).

2 disordered regions span residues 1–26 and 271–292; these read MSSN…EATS and KNFY…KKSY. A phosphoserine mark is found at Ser276 and Ser610. Residues 668–824 are disordered; that stretch reads KKEKPMKKFY…KPQQERHPPS (157 aa). Positions 679–704 are enriched in acidic residues; it reads ESEEEEDEDEDEDEEEEEKEDEDENP. Composition is skewed to low complexity over residues 705–722 and 730–741; these read SDSS…SGDT and DSSSGQDSETGS. The span at 750-759 shows a compositional bias: basic residues; the sequence is VAKRNSKTKR. Residues 760–774 are compositionally biased toward basic and acidic residues; sequence KSDSENREKKNENSK. A phosphoserine mark is found at Ser761 and Ser763. Low complexity predominate over residues 775-788; sequence ASESSSEESSSMED. Acidic residues predominate over residues 789-799; it reads SSSESESESGS. Residues 811-824 are compositionally biased toward basic and acidic residues; sequence AKERKPQQERHPPS.

This sequence belongs to the adaptor complexes large subunit family. Adaptor protein complex 3 (AP-3) is a heterotetramer composed of two large adaptins (delta-type subunit AP3D1 and beta-type subunit AP3B1 or AP3B2), a medium adaptin (mu-type subunit AP3M1 or AP3M2) and a small adaptin (sigma-type subunit APS1 or AP3S2). AP-3 associates with the BLOC-1 complex. Interacts with KIF3A; interaction is direct; interaction is impaired by pyrophosphorylation of AP3B1. Phosphorylated on serine residues. In terms of processing, pyrophosphorylated by 5-diphosphoinositol pentakisphosphate (5-IP7). Pyrophosphorylation impairs interaction with KIF3A. Serine pyrophosphorylation is achieved by Mg(2+)-dependent, but enzyme independent transfer of a beta-phosphate from a inositol pyrophosphate to a pre-phosphorylated serine residue. As to expression, ubiquitously expressed.

It localises to the cytoplasmic vesicle. It is found in the clathrin-coated vesicle membrane. The protein resides in the golgi apparatus. Subunit of non-clathrin- and clathrin-associated adaptor protein complex 3 (AP-3) that plays a role in protein sorting in the late-Golgi/trans-Golgi network (TGN) and/or endosomes. The AP complexes mediate both the recruitment of clathrin to membranes and the recognition of sorting signals within the cytosolic tails of transmembrane cargo molecules. AP-3 appears to be involved in the sorting of a subset of transmembrane proteins targeted to lysosomes and lysosome-related organelles. In concert with the BLOC-1 complex, AP-3 is required to target cargos into vesicles assembled at cell bodies for delivery into neurites and nerve terminals. This is AP-3 complex subunit beta-1 (Ap3b1) from Mus musculus (Mouse).